A 92-amino-acid chain; its full sequence is Small ribosomal subunit protein bS18 (92 aa).

The protein belongs to the bacterial ribosomal protein bS18 family. As to quaternary structure, part of the 30S ribosomal subunit. Forms a tight heterodimer with protein bS6.

Binds as a heterodimer with protein bS6 to the central domain of the 16S rRNA, where it helps stabilize the platform of the 30S subunit. This is Small ribosomal subunit protein bS18 from Pelagibacter ubique (strain HTCC1062).